We begin with the raw amino-acid sequence, 474 residues long: Serine--tRNA ligase (474 aa).

278–280 (TAE) serves as a coordination point for L-serine. ATP is bound at residue 309 to 311 (RSE). Glutamate 332 is an L-serine binding site. 396 to 399 (EISS) is a binding site for ATP. Residue serine 432 participates in L-serine binding.

The protein belongs to the class-II aminoacyl-tRNA synthetase family. Type-1 seryl-tRNA synthetase subfamily. Homodimer. The tRNA molecule binds across the dimer.

Its subcellular location is the cytoplasm. It carries out the reaction tRNA(Ser) + L-serine + ATP = L-seryl-tRNA(Ser) + AMP + diphosphate + H(+). The catalysed reaction is tRNA(Sec) + L-serine + ATP = L-seryl-tRNA(Sec) + AMP + diphosphate + H(+). Its pathway is aminoacyl-tRNA biosynthesis; selenocysteinyl-tRNA(Sec) biosynthesis; L-seryl-tRNA(Sec) from L-serine and tRNA(Sec): step 1/1. Functionally, catalyzes the attachment of serine to tRNA(Ser). Is also able to aminoacylate tRNA(Sec) with serine, to form the misacylated tRNA L-seryl-tRNA(Sec), which will be further converted into selenocysteinyl-tRNA(Sec). The chain is Serine--tRNA ligase from Caulobacter sp. (strain K31).